Here is a 102-residue protein sequence, read N- to C-terminus: Exocrine gland-secreted peptide 1 (102 aa).

An N-terminal signal peptide occupies residues 1-22 (MTSLPVLLFLIILLLPSMITEG). Cys63 and Cys95 are oxidised to a cystine.

It belongs to the exocrine gland-secreted peptide family. In terms of assembly, monomer. As to expression, expressed in the extraorbital lacrimal gland from where it is secreted into tears.

It is found in the secreted. In terms of biological role, male-specific phermone which is recognized by the Vmn2r116/V2rp5 receptor in the vomeronasal organ (VNO) and enhances female sexual receptive behavior (lordosis) upon male mounting, resulting in successful copulation. The protein is Exocrine gland-secreted peptide 1 of Mus musculus (Mouse).